The sequence spans 253 residues: Tryptophan synthase alpha chain (253 aa).

Catalysis depends on proton acceptor residues E47 and D58.

It belongs to the TrpA family. Tetramer of two alpha and two beta chains.

It catalyses the reaction (1S,2R)-1-C-(indol-3-yl)glycerol 3-phosphate + L-serine = D-glyceraldehyde 3-phosphate + L-tryptophan + H2O. It participates in amino-acid biosynthesis; L-tryptophan biosynthesis; L-tryptophan from chorismate: step 5/5. Its function is as follows. The alpha subunit is responsible for the aldol cleavage of indoleglycerol phosphate to indole and glyceraldehyde 3-phosphate. This Lactococcus lactis subsp. cremoris (strain SK11) protein is Tryptophan synthase alpha chain.